Consider the following 445-residue polypeptide: Histamine H3 receptor (445 aa).

The Extracellular segment spans residues 1–39 (MERAPPDGLMNASGALAGEAAAAGGARGFSAAWTAVLAA). N-linked (GlcNAc...) asparagine glycosylation occurs at N11. The helical transmembrane segment at 40–60 (LMALLIVATVLGNALVMLAFV) threads the bilayer. Residues 61–70 (ADSSLRTQNN) are Cytoplasmic-facing. A helical transmembrane segment spans residues 71–91 (FFLLNLAISDFLVGAFCIPLY). Residues 92–108 (VPYVLTGRWTFGRGLCK) are Extracellular-facing. A disulfide bridge links C107 with C188. A helical membrane pass occupies residues 109-129 (LWLVVDYLLCASSVFNIVLIS). Topologically, residues 130–156 (YDRFLSVTRAVSYRAQQGDTRRAVRKM) are cytoplasmic. The chain crosses the membrane as a helical span at residues 157–177 (ALVWVLAFLLYGPAILSWEYL). Topologically, residues 178 to 196 (SGGSSIPEGHCYAEFFYNW) are extracellular. A helical transmembrane segment spans residues 197-217 (YFLITASTLEFFTPFLSVTFF). Over 218–359 (NLSIYLNIQR…LSRDKKVAKS (142 aa)) the chain is Cytoplasmic. Disordered regions lie at residues 234–259 (DGGR…PSCW) and 273–336 (HRYG…LEKR). Pro residues predominate over residues 241 to 256 (PEPPPDAQPSPPPAPP). Residues 289–299 (AGLGGGSGGGA) are compositionally biased toward gly residues. A compositionally biased stretch (low complexity) spans 300-312 (AASPTSSSGSSSR). The helical transmembrane segment at 360 to 380 (LAIIVSIFGLCWAPYTLLMII) threads the bilayer. At 381–396 (RAACHGHCVPDYWYET) the chain is on the extracellular side. A helical membrane pass occupies residues 397–417 (SFWLLWANSAVNPVLYPLCHY). Residues 418–445 (SFRRAFTKLLCPQKLKVQPHGSLEQCWK) are Cytoplasmic-facing. S439 carries the phosphoserine modification.

The protein belongs to the G-protein coupled receptor 1 family.

The protein localises to the cell membrane. In terms of biological role, the H3 subclass of histamine receptors could mediate the histamine signals in CNS and peripheral nervous system. Signals through the inhibition of adenylate cyclase and displays high constitutive activity (spontaneous activity in the absence of agonist). The sequence is that of Histamine H3 receptor (Hrh3) from Mus musculus (Mouse).